A 391-amino-acid polypeptide reads, in one-letter code: Mannonate dehydratase (391 aa).

Belongs to the mannonate dehydratase family. Fe(2+) is required as a cofactor. Requires Mn(2+) as cofactor.

The enzyme catalyses D-mannonate = 2-dehydro-3-deoxy-D-gluconate + H2O. It participates in carbohydrate metabolism; pentose and glucuronate interconversion. Functionally, catalyzes the dehydration of D-mannonate. This chain is Mannonate dehydratase, found in Marinomonas sp. (strain MWYL1).